Here is a 568-residue protein sequence, read N- to C-terminus: Sulfate adenylyltransferase (568 aa).

The interval 1–162 (MANSPHGGVL…IEAVNKLNHY (162 aa)) is N-terminal. A catalytic region spans residues 163–388 (DYVALRYSPA…LRESSPPRAT (226 aa)). Position 190 (Q190) interacts with sulfate. ATP-binding positions include 190–193 (QTRN) and 284–287 (GRDH). Residues T191, R192, and N193 contribute to the active site. Residue R192 participates in sulfate binding. A288 provides a ligand contact to sulfate. V326 provides a ligand contact to ATP. The interval 389 to 568 (QGFTIFLTGY…LESEGYFDRL (180 aa)) is allosteric regulation domain; adenylyl-sulfate kinase-like. 3'-phosphoadenylyl sulfate-binding positions include 428 to 431 (DTVR), R445, 471 to 472 (IA), and R510.

It in the N-terminal section; belongs to the sulfate adenylyltransferase family. This sequence in the C-terminal section; belongs to the APS kinase family. As to quaternary structure, homohexamer. Dimer of trimers.

It localises to the cytoplasm. It carries out the reaction sulfate + ATP + H(+) = adenosine 5'-phosphosulfate + diphosphate. Its pathway is sulfur metabolism; hydrogen sulfide biosynthesis; sulfite from sulfate: step 1/3. With respect to regulation, allosterically inhibited by 3'-phosphoadenosine 5'-phosphosulfate (PAPS). Its function is as follows. Catalyzes the first intracellular reaction of sulfate assimilation, forming adenosine-5'-phosphosulfate (APS) from inorganic sulfate and ATP. Plays an important role in sulfate activation as a component of the biosynthesis pathway of sulfur-containing amino acids. The protein is Sulfate adenylyltransferase of Aspergillus terreus.